Reading from the N-terminus, the 808-residue chain is TBC1 domain family member 10B (808 aa).

Disordered stretches follow at residues Met-1 to Pro-38, Pro-60 to Glu-225, and Pro-237 to Pro-264. Position 22 is a phosphoserine (Ser-22). Positions Gly-27–Pro-38 are enriched in low complexity. Pro residues predominate over residues Ala-100–Pro-112. Residue Ser-141 is modified to Phosphoserine. Residues Pro-149–Thr-178 show a composition bias toward low complexity. Thr-152 is subject to Phosphothreonine. The segment covering Val-179–Ser-189 has biased composition (polar residues). Arg-186 carries the post-translational modification Omega-N-methylarginine. Positions Ala-198 to Ala-209 are enriched in low complexity. The segment covering Asn-242–Leu-252 has biased composition (polar residues). A Rab-GAP TBC domain is found at Gly-360–Gly-548. The segment at Gln-629–Phe-808 is disordered. The segment covering Pro-655–Ala-676 has biased composition (low complexity). Phosphoserine is present on residues Ser-658, Ser-661, Ser-678, and Ser-687. Residues Arg-684–Val-696 are compositionally biased toward low complexity. Positions Ser-707 to Ser-718 are enriched in polar residues. The stretch at Gly-716–Arg-782 forms a coiled coil. Composition is skewed to basic and acidic residues over residues Lys-719 to Ala-774 and Asp-793 to Phe-808.

Its subcellular location is the cytoplasm. The protein localises to the cell membrane. Its function is as follows. Acts as a GTPase-activating protein for RAB3A, RAB22A, RAB27A, and RAB35. Does not act on RAB2A and RAB6A. The sequence is that of TBC1 domain family member 10B (TBC1D10B) from Homo sapiens (Human).